Reading from the N-terminus, the 380-residue chain is MKNEMLALILAGGQGTRLGKLTQSIAKPAVQFGGRYRIIDFALSNCANSGIHNVGVVTQYQPLALNNHIGNGSSWGLDGINSGVSILQPYSASEGNRWFEGTSHAIYQNIDYIDNVNPEYVLILSGDHIYKMDYDDMLQSHKDNNASLTVAVLDVPLKEASRFGIMNTDANNRIVEFEEKPAQPKSTKASMGIYIFDWQRLRNMLVAAEKSKVGMSDFGKNVIPNYLESGESVYAYEFSGYWKDVGTIESLWEANMEYISPENALDSRNRQWKIYSRNLISPPNFLGANAHVEDSLVVDGCFVDGTVKHSILSRGAQVREGAEVLDSVIMSGAIIGQGAKIKRAIIGEGAIISDGVEIDGTDEVQVVGYNEVVGVATDED.

Alpha-D-glucose 1-phosphate-binding positions include Gly164, 179–180 (EK), and Ser190.

Belongs to the bacterial/plant glucose-1-phosphate adenylyltransferase family. As to quaternary structure, homotetramer.

The catalysed reaction is alpha-D-glucose 1-phosphate + ATP + H(+) = ADP-alpha-D-glucose + diphosphate. The protein operates within glycan biosynthesis; glycogen biosynthesis. Its function is as follows. Involved in the biosynthesis of ADP-glucose, a building block required for the elongation reactions to produce glycogen. Catalyzes the reaction between ATP and alpha-D-glucose 1-phosphate (G1P) to produce pyrophosphate and ADP-Glc. In Streptococcus pneumoniae serotype 2 (strain D39 / NCTC 7466), this protein is Glucose-1-phosphate adenylyltransferase.